The sequence spans 461 residues: Cysteine--tRNA ligase (461 aa).

C28 is a Zn(2+) binding site. The 'HIGH' region signature appears at 30 to 40 (ITVYDLCHIGH). Residues C209, H234, and E238 each coordinate Zn(2+). The 'KMSKS' region signature appears at 266 to 270 (KMSKS). K269 contacts ATP.

The protein belongs to the class-I aminoacyl-tRNA synthetase family. In terms of assembly, monomer. Requires Zn(2+) as cofactor.

The protein localises to the cytoplasm. It catalyses the reaction tRNA(Cys) + L-cysteine + ATP = L-cysteinyl-tRNA(Cys) + AMP + diphosphate. The chain is Cysteine--tRNA ligase from Escherichia coli (strain SMS-3-5 / SECEC).